Reading from the N-terminus, the 700-residue chain is MEFASPEQRRLETIRSHIDTSPTNDQSSSLFLNATASSASPFFKEDSYSVVLPEKLDTGKWNVYRSKRSPTKLVSRFPDHPEIGTLHDNFVHAVETYAENKYLGTRVRSDGTIGEYSWMTYGEAASERQAIGSGLLFHGVNQGDCVGLYFINRPEWLVVDHACAAYSFVSVPLYDTLGPDAVKFVVNHANLQAIFCVPQTLNILLSFLAEIPSIRLIVVVGGADEHLPSLPRGTGVTIVSYQKLLSQGRSSLHPFSPPKPEDIATICYTSGTTGTPKGVVLTHGNLIANVAGSSVEAEFFPSDVYISYLPLAHIYERANQIMGVYGGVAVGFYQGDVFKLMDDFAVLRPTIFCSVPRLYNRIYDGITSAVKSSGVVKKRLFEIAYNSKKQAIINGRTPSAFWDKLVFNKIKEKLGGRVRFMGSGASPLSPDVMDFLRICFGCSVREGYGMTETSCVISAMDDGDNLSGHVGSPNPACEVKLVDVPEMNYTSDDQPYPRGEICVRGPIIFKGYYKDEEQTREILDGDGWLHTGDIGLWLPGGRLKIIDRKKNIFKLAQGEYIAPEKIENVYTKCRFVSQCFIHGDSFNSSLVAIVSVDPEVMKDWAASEGIKYEHLGQLCNDPRVRKTVLAEMDDLGREAQLRGFEFAKAVTLVPEPFTLENGLLTPTFKIKRPQAKAYFAEAISKMYAEIAASNPIPSKL.

The disordered stretch occupies residues 1–29 (MEFASPEQRRLETIRSHIDTSPTNDQSSS). Residues 7–18 (EQRRLETIRSHI) show a composition bias toward basic and acidic residues. Residues 10-18 (RLETIRSHI) carry the Microbody targeting signal motif. Polar residues predominate over residues 19-29 (DTSPTNDQSSS). 266-277 (ICYTSGTTGTPK) lines the ATP pocket. The fatty acid-binding stretch occupies residues 526–550 (DGWLHTGDIGLWLPGGRLKIIDRKK). The Microbody targeting signal signature appears at 698–700 (SKL).

Belongs to the ATP-dependent AMP-binding enzyme family. Interacts with PEX5. Mg(2+) is required as a cofactor. Expressed in roots, stems, leaves flowers and germinating seedling. Preferentially expressed in seeds.

Its subcellular location is the peroxisome. The catalysed reaction is a long-chain fatty acid + ATP + CoA = a long-chain fatty acyl-CoA + AMP + diphosphate. It catalyses the reaction decanoate + ATP + CoA = decanoyl-CoA + AMP + diphosphate. It carries out the reaction dodecanoate + ATP + CoA = dodecanoyl-CoA + AMP + diphosphate. The enzyme catalyses tetradecanoate + ATP + CoA = tetradecanoyl-CoA + AMP + diphosphate. The catalysed reaction is hexadecanoate + ATP + CoA = hexadecanoyl-CoA + AMP + diphosphate. It catalyses the reaction (9Z)-octadecenoate + ATP + CoA = (9Z)-octadecenoyl-CoA + AMP + diphosphate. It carries out the reaction (9Z,12Z)-octadecadienoate + ATP + CoA = (9Z,12Z)-octadecadienoyl-CoA + AMP + diphosphate. The enzyme catalyses (9Z,12Z,15Z)-octadecatrienoate + ATP + CoA = (9Z,12Z,15Z)-octadecatrienoyl-CoA + AMP + diphosphate. It participates in lipid metabolism; fatty acid metabolism. Activation of long-chain fatty acids for both synthesis of cellular lipids, and degradation via beta-oxidation. Preferentially uses palmitate, palmitoleate, oleate, linoleate and eicosenoate as substrates. Can use myristate and linolenate as substrates. Functions redundantly with LACS6 in lipid mobilization for beta-oxidation during seed germination, which is essential for postgerminative growth and seedling establishment. The chain is Long chain acyl-CoA synthetase 7, peroxisomal from Arabidopsis thaliana (Mouse-ear cress).